A 662-amino-acid polypeptide reads, in one-letter code: ATP-dependent zinc metalloprotease YME1 homolog (662 aa).

206–213 contacts ATP; sequence GPPGVGKT. Residue histidine 425 coordinates Zn(2+). The active site involves glutamate 426. Residues histidine 429 and aspartate 503 each contribute to the Zn(2+) site.

It in the N-terminal section; belongs to the AAA ATPase family. This sequence in the C-terminal section; belongs to the peptidase M41 family. Requires Zn(2+) as cofactor.

Functionally, putative ATP-dependent protease. This Schistosoma mansoni (Blood fluke) protein is ATP-dependent zinc metalloprotease YME1 homolog.